The primary structure comprises 373 residues: Aromatic amino acid aminotransferase (373 aa).

Position 212 is an N6-(pyridoxal phosphate)lysine (Lys-212).

This sequence belongs to the class-II pyridoxal-phosphate-dependent aminotransferase family. Homodimer. It depends on pyridoxal 5'-phosphate as a cofactor.

The catalysed reaction is an aromatic L-alpha-amino acid + 2-oxoglutarate = an aromatic oxo-acid + L-glutamate. Its function is as follows. Aminotransferase that catalyzes the conversion of aromatic amino acids and 2-oxoglutarate into corresponding aromatic oxo acids and L-glutamate. The chain is Aromatic amino acid aminotransferase from Corynebacterium jeikeium (strain K411).